A 249-amino-acid chain; its full sequence is Vesicle-associated membrane protein-associated protein A (249 aa).

N-acetylalanine is present on Ala-2. Topologically, residues 2 to 227 (ASASGTMAKH…VSFRENVTSP (226 aa)) are cytoplasmic. The MSP domain maps to 14–131 (ILVLDPPTDL…MDSKLRCVFE (118 aa)). Residues 50-53 (KVKT) are phosphorylated FFAT motif binding. The residue at position 125 (Lys-125) is an N6-acetyllysine. Position 166 is a phosphoserine (Ser-166). Residues 169-205 (DTETRKLVEECKRLQGEMMKLSEENRLLRDEGLRLRK) adopt a coiled-coil conformation. Position 170 is a phosphothreonine (Thr-170). Phosphoserine is present on residues Ser-214, Ser-216, and Ser-219. Residues 228-248 (LPSLLVVIAAIFIGFFLGKFI) form a helical; Anchor for type IV membrane protein membrane-spanning segment.

It belongs to the VAMP-associated protein (VAP) (TC 9.B.17) family. In terms of assembly, homodimer; disulfide-linked. Heterodimer with VAPB. Interacts with VAMP1, VAMP2, STX1A, BET1, SEC22C and with the C-terminal domain of OCLN. Interacts (via MSP domain) with OSBPL1A (via FFAT motif). Interacts (via MSP domain) with ZFYVE27; may retain ZFYVE27 in the endoplasmic reticulum and regulate its function in cell projections formation. Interacts with OSBP. Interacts (via C-terminus) with RSAD2/viperin (via C-terminus). Interacts with IFITM3. Interacts with OSBPL3 (phosphorylated form). Interacts with KIF5A in a ZFYVE27-dependent manner. Interacts (via MSP domain) with STARD3 (via phosphorylated FFAT motif); this interaction recruits VAPA to the endosome. Interacts with STARD3NL (via FFAT motif). Interacts with CERT1. Interacts with PLEKHA3 and SACM1L to form a ternary complex. Interacts with VPS13A (via FFAT motif). Interacts with RB1CC1 (via phosphorylated FFAT motif), MIGA2 (via phosphorylated FFAT motif), RMDN3 (via phosphorylated FFAT motif), KCNB1 (via phosphorylated FFAT motif) and KCNB2 (via phosphorylated FFAT motif). Interacts (via MSP domain) with WDR44 (via FFAT-like motif); the interactions connect the endoplasmic reticulum (ER) with the endosomal tubule.

It localises to the endoplasmic reticulum membrane. Its subcellular location is the cell junction. The protein localises to the tight junction. It is found in the cell membrane. Functionally, endoplasmic reticulum (ER)-anchored protein that mediates the formation of contact sites between the ER and endosomes via interaction with FFAT motif-containing proteins such as STARD3 or WDR44. STARD3-VAPA interaction enables cholesterol transfer from the ER to endosomes. Via interaction with WDR44 participates in neosynthesized protein export. In addition, recruited to the plasma membrane through OSBPL3 binding. The OSBPL3-VAPA complex stimulates RRAS signaling which in turn attenuates integrin beta-1 (ITGB1) activation at the cell surface. With OSBPL3, may regulate ER morphology. May play a role in vesicle trafficking. This Bos taurus (Bovine) protein is Vesicle-associated membrane protein-associated protein A.